Consider the following 423-residue polypeptide: Protein TylM3 (423 aa).

Over residues 1 to 21 (MNTAAGPTGTAAGGTTAPAAA) the composition is skewed to low complexity. 2 disordered regions span residues 1–26 (MNTAAGPTGTAAGGTTAPAAAHDLSR) and 117–149 (GSALDAAHGNPGGPPLPGGWPHRPPDREERDDP). Basic and acidic residues predominate over residues 139 to 149 (RPPDREERDDP).

Belongs to the cytochrome P450 family.

It functions in the pathway antibiotic biosynthesis; tylosin biosynthesis. In terms of biological role, involved in the biosynthesis of the macrolide antibiotic tylosin derived from the polyketide lactone tylactone. TylM3 is required for the glycosylation of the 5-hydroxyl group of tylactone to yield 5-O-mycaminosytylactone. This chain is Protein TylM3, found in Streptomyces fradiae (Streptomyces roseoflavus).